Here is a 48-residue protein sequence, read N- to C-terminus: uncharacterized protein (48 aa).

This is an uncharacterized protein from Acidianus convivator (ABV).